The primary structure comprises 117 residues: Flagellar transcriptional regulator FlhD (117 aa).

This sequence belongs to the FlhD family. Homodimer; disulfide-linked. Forms a heterohexamer composed of two FlhC and four FlhD subunits. Each FlhC binds a FlhD dimer, forming a heterotrimer, and a hexamer assembles by dimerization of two heterotrimers.

It is found in the cytoplasm. In terms of biological role, functions in complex with FlhC as a master transcriptional regulator that regulates transcription of several flagellar and non-flagellar operons by binding to their promoter region. Activates expression of class 2 flagellar genes, including fliA, which is a flagellum-specific sigma factor that turns on the class 3 genes. Also regulates genes whose products function in a variety of physiological pathways. The chain is Flagellar transcriptional regulator FlhD from Photorhabdus laumondii subsp. laumondii (strain DSM 15139 / CIP 105565 / TT01) (Photorhabdus luminescens subsp. laumondii).